Here is a 109-residue protein sequence, read N- to C-terminus: MQAIHNDKSLLSPFSELNTDNRTQREESGSTFKEQKGGEFSKLLKQSISELNNTQEQSDKALADMATGQIKDLHQAAIAIGKAETSMKLMLEVRNKAISAYKELLRTQI.

The disordered stretch occupies residues 1–38 (MQAIHNDKSLLSPFSELNTDNRTQREESGSTFKEQKGG). Over residues 22-38 (RTQREESGSTFKEQKGG) the composition is skewed to basic and acidic residues.

It belongs to the FliE family.

Its subcellular location is the bacterial flagellum basal body. This Helicobacter acinonychis (strain Sheeba) protein is Flagellar hook-basal body complex protein FliE.